We begin with the raw amino-acid sequence, 31 residues long: Cytochrome b6-f complex subunit 6 (31 aa).

Residues 3–23 traverse the membrane as a helical segment; sequence LFIGYIIFLVAFFGLATGLFL.

Belongs to the PetL family. As to quaternary structure, the 4 large subunits of the cytochrome b6-f complex are cytochrome b6, subunit IV (17 kDa polypeptide, PetD), cytochrome f and the Rieske protein, while the 4 small subunits are PetG, PetL, PetM and PetN. The complex functions as a dimer.

The protein localises to the plastid. Its subcellular location is the chloroplast thylakoid membrane. Component of the cytochrome b6-f complex, which mediates electron transfer between photosystem II (PSII) and photosystem I (PSI), cyclic electron flow around PSI, and state transitions. PetL is important for photoautotrophic growth as well as for electron transfer efficiency and stability of the cytochrome b6-f complex. In Porphyra purpurea (Red seaweed), this protein is Cytochrome b6-f complex subunit 6.